Consider the following 816-residue polypeptide: MGSNLPAQPNLRVTIIAADGLYKRDVFRFPDPFAVATVGGEQTHTTSVIKKTLNPYWNEMFDLRVNEDSILAIQIFDQKKFKKKDQGFLGVINVRIGDVIDLQMGGDEMLTRDLKKSNDNLVVHGKLIINLSTNLSTPNTNQANGLHRSHMQPSTSSGLVPQVSASTPQPSPGPSQADPTASNPSLHPQRVPSTTRPSSTIVPANGPPAPPNGQQGSRTNLSSFEDSQGRLPAGWERREDNLGRTYYVDHNTRTTTWTRPSNNYNEQTSRTQREASMQLERRAHQSRMLPEDRTGASSPNLQENQQQAQTPPAGGSASAVSMMATGATTAGTGELPPGWEQRTTPEGRPYFVDHNTRTTTWVDPRRQQYIRMYGQNANGTNTTIQQQPVSQLGPLPSGWEMRLTNTARVYFVDHNTKTTTWDDPRLPSSLDQGVPQYKRDFRRKLIYFRSQPALRIMSGQCHVKVRRNNIFEDSYAEIMRQSASDLKKRLMIKFDGEDGLDYGGLSRREFFFLLSHEMFNPFYCLFEYSAHDNYTLQINPHSGVNPEHLNYFKFIGRVVGLAIFHRRFLDSFFIGAFYKMMLRKKVSLQDMEGVDEDLHRNLTWTLDNDIEGIIELTFAVDDEKFGERRTIDLKPGGRDIPVTNENKGEYVELVTEWKIVKRVEEQFNAFMSGFNELIPADLVNVFDERELELLIGGIADIDVDDWKKHTDYRGYQESDEVIQNFWKIVRTWDAEQKSRLLQFTTGTSRIPVNGFKDLQGSDGPRRFTIEKSGDPGALPKSHTCFNRLDLPPYKTNDVLEHKLSIAVEETLGFGQE.

The C2 domain maps to 1–112; that stretch reads MGSNLPAQPN…QMGGDEMLTR (112 aa). Disordered regions lie at residues 134-238 and 253-353; these read NLST…WERR and RTTT…YFVD. 4 stretches are compositionally biased toward polar residues: residues 151–168, 177–202, 217–226, and 253–270; these read MQPSTSSGLVPQVSASTP, ADPTASNPSLHPQRVPSTTRPSSTIV, SRTNLSSFED, and RTTTWTRPSNNYNEQTSR. Positions 229–262 constitute a WW 1 domain; that stretch reads GRLPAGWERREDNLGRTYYVDHNTRTTTWTRPSN. A compositionally biased stretch (basic and acidic residues) spans 279–294; it reads LERRAHQSRMLPEDRT. Over residues 295–309 the composition is skewed to polar residues; sequence GASSPNLQENQQQAQ. Low complexity predominate over residues 310–333; the sequence is TPPAGGSASAVSMMATGATTAGTG. WW domains follow at residues 333-366 and 393-426; these read GELPPGWEQRTTPEGRPYFVDHNTRTTTWVDPRR and GPLPSGWEMRLTNTARVYFVDHNTKTTTWDDPRL. One can recognise an HECT domain in the interval 482-816; it reads SASDLKKRLM…VEETLGFGQE (335 aa). The active-site Glycyl thioester intermediate is the Cys784.

It belongs to the RSP5/NEDD4 family. Interacts with creD.

It localises to the cytoplasm. The enzyme catalyses S-ubiquitinyl-[E2 ubiquitin-conjugating enzyme]-L-cysteine + [acceptor protein]-L-lysine = [E2 ubiquitin-conjugating enzyme]-L-cysteine + N(6)-ubiquitinyl-[acceptor protein]-L-lysine.. Its pathway is protein modification; protein ubiquitination. Its function is as follows. E3 ubiquitin-protein ligase which accepts ubiquitin from an E2 ubiquitin-conjugating enzyme in the form of a thioester and then directly transfers the ubiquitin to targeted substrates. Probably involved in the regulatory network controlling carbon source utilization. This is Probable E3 ubiquitin-protein ligase hulA (hulA) from Aspergillus oryzae (strain ATCC 42149 / RIB 40) (Yellow koji mold).